Here is a 789-residue protein sequence, read N- to C-terminus: Aryl hydrocarbon receptor nuclear translocator (789 aa).

The segment covering 1–14 has biased composition (polar residues); it reads MAATTANPEMTSDV. The disordered stretch occupies residues 1–97; the sequence is MAATTANPEM…RLARENHSEI (97 aa). A2 bears the N-acetylalanine mark. The segment covering 26–35 has biased composition (gly residues); it reads SGPGIQGGGA. K58 is covalently cross-linked (Glycyl lysine isopeptide (Lys-Gly) (interchain with G-Cter in SUMO2)). Residues 60–97 are compositionally biased toward basic and acidic residues; the sequence is LRCDDDQMSNDKERFARSDDEQSSADKERLARENHSEI. Position 77 is a phosphoserine (S77). The tract at residues 88-128 is DNA-binding; it reads RLARENHSEIERRRRNKMTAYITELSDMVPTCSALARKPDK. Residues 89–142 enclose the bHLH domain; sequence LARENHSEIERRRRNKMTAYITELSDMVPTCSALARKPDKLTILRMAVSHMKSL. Residues 112–168 form a required for heterodimer formation with HIF1A region; sequence LSDMVPTCSALARKPDKLTILRMAVSHMKSLRGTGNTSTDGSYKPSFLTDQELKHLI. The tract at residues 112–264 is required for heterodimer formation with EPAS1; sequence LSDMVPTCSA…MCMGSRRSFI (153 aa). 2 consecutive PAS domains span residues 161–235 and 349–419; these read DQEL…LTGR and PNCT…VKLK. Residues 167 to 171 are mediates the transcription activity and dimerization of the AHR:ARNT complex; sequence LILEA. One can recognise a PAC domain in the interval 424-467; the sequence is SVMFRFRSKNQEWLWMRTSSFTFQNPYSDEIEYIICTNTNVKNS. The span at 465 to 481 shows a compositional bias: polar residues; the sequence is KNSSQEPRPTLSNTIQR. 2 disordered regions span residues 465–492 and 672–789; these read KNSS…NLPL and TPSS…PFSE. The segment covering 672–696 has biased composition (low complexity); that stretch reads TPSSFSSMSLPGAPTASPGAAAYPS. Positions 708 to 719 are enriched in polar residues; sequence TGQTAGQFQTRT. Composition is skewed to low complexity over residues 723–733 and 743–756; these read VGVWPQWQGQQ and QHVQ…PGQP.

As to quaternary structure, monomer. Homodimer only upon binding to a DNA. Efficient DNA binding requires dimerization with another bHLH protein. Interacts with TACC3. Interacts with HIF1A, EPAS1, NPAS1 and NPAS3; forms a heterodimer that binds core DNA sequence 5'-TACGTG-3' within the hypoxia response element (HRE) of target gene promoters. Forms a heterodimer with AHRR, as well as with other bHLH proteins. Interacts with NOCA7. Interacts with TACC3. Interacts with AHR; the heterodimer ARNT:AHR binds to core DNA sequence 5'-TGCGTG-3' within the dioxin response element (DRE) of target gene promoters and activates their transcription. Interacts with SIM1 and NPAS4.

It is found in the nucleus. Functionally, required for activity of the AHR. Upon ligand binding, AHR translocates into the nucleus, where it heterodimerizes with ARNT and induces transcription by binding to xenobiotic response elements (XRE). Not required for the ligand-binding subunit to translocate from the cytosol to the nucleus after ligand binding. The complex initiates transcription of genes involved in the regulation of a variety of biological processes, including angiogenesis, hematopoiesis, drug and lipid metabolism, cell motility and immune modulation. The heterodimer binds to core DNA sequence 5'-TACGTG-3' within the hypoxia response element (HRE) of target gene promoters and functions as a transcriptional regulator of the adaptive response to hypoxia. The heterodimer ARNT:AHR binds to core DNA sequence 5'-TGCGTG-3' within the dioxin response element (DRE) of target gene promoters and activates their transcription. The chain is Aryl hydrocarbon receptor nuclear translocator from Homo sapiens (Human).